Reading from the N-terminus, the 176-residue chain is Caltractin (176 aa).

The disordered stretch occupies residues 1–27 (MNRAAIAAGKPSGSISTGKPRRKTRAE). EF-hand domains lie at 31-66 (EMKHEIREAFDLFDADRSGRIDFHELKVAMRALGFD), 67-102 (VKKEEIQRIMNEYDRDQLGEITFQDFEEVMIEKISN), 104-139 (DPTEEILKAFRLFDDDATGRISLKNLRRVAKELSEN), and 140-175 (ISDEELLAMIQEFDRDGDGEIDEEDFIAILRSTSAF). Positions 44, 46, 48, 50, and 55 each coordinate Ca(2+). 5 residues coordinate Ca(2+): aspartate 153, aspartate 155, aspartate 157, glutamate 159, and aspartate 164.

The protein belongs to the centrin family. As to quaternary structure, monomer.

The protein resides in the cytoplasm. The protein localises to the cytoskeleton. It localises to the microtubule organizing center. It is found in the centrosome. Plays a fundamental role in microtubule-organizing center structure and function. This chain is Caltractin (CAL), found in Giardia intestinalis (Giardia lamblia).